A 395-amino-acid chain; its full sequence is Acetate kinase (395 aa).

Asparagine 7 provides a ligand contact to Mg(2+). Lysine 14 serves as a coordination point for ATP. Arginine 90 serves as a coordination point for substrate. Aspartate 147 acts as the Proton donor/acceptor in catalysis. Residues histidine 207–glycine 211, aspartate 282–arginine 284, and glycine 330–asparagine 334 each bind ATP. Mg(2+) is bound at residue glutamate 383.

Belongs to the acetokinase family. In terms of assembly, homodimer. The cofactor is Mg(2+). Requires Mn(2+) as cofactor.

The protein localises to the cytoplasm. It carries out the reaction acetate + ATP = acetyl phosphate + ADP. Its pathway is metabolic intermediate biosynthesis; acetyl-CoA biosynthesis; acetyl-CoA from acetate: step 1/2. Catalyzes the formation of acetyl phosphate from acetate and ATP. Can also catalyze the reverse reaction. The protein is Acetate kinase of Lachnoclostridium phytofermentans (strain ATCC 700394 / DSM 18823 / ISDg) (Clostridium phytofermentans).